The following is a 1402-amino-acid chain: DNA-directed RNA polymerase subunit beta' (1402 aa).

Positions 73, 75, 88, and 91 each coordinate Zn(2+). Aspartate 464, aspartate 466, and aspartate 468 together coordinate Mg(2+). The Zn(2+) site is built by cysteine 812, cysteine 886, cysteine 893, and cysteine 896.

The protein belongs to the RNA polymerase beta' chain family. As to quaternary structure, the RNAP catalytic core consists of 2 alpha, 1 beta, 1 beta' and 1 omega subunit. When a sigma factor is associated with the core the holoenzyme is formed, which can initiate transcription. Requires Mg(2+) as cofactor. It depends on Zn(2+) as a cofactor.

The enzyme catalyses RNA(n) + a ribonucleoside 5'-triphosphate = RNA(n+1) + diphosphate. Functionally, DNA-dependent RNA polymerase catalyzes the transcription of DNA into RNA using the four ribonucleoside triphosphates as substrates. This is DNA-directed RNA polymerase subunit beta' from Rhodopseudomonas palustris (strain ATCC BAA-98 / CGA009).